The chain runs to 605 residues: Glucose oxidase (605 aa).

The signal sequence occupies residues 1 to 16; sequence MKTILSSSLVVSMAAA. FAD-binding residues include L51 and T52. N65 carries N-linked (GlcNAc...) asparagine glycosylation. E72 serves as a coordination point for FAD. The N-linked (GlcNAc...) asparagine glycan is linked to N111. S125, N129, G130, and T132 together coordinate FAD. The cysteines at positions 186 and 228 are disulfide-linked. N-linked (GlcNAc...) asparagine glycosylation is present at N190. V272 contacts FAD. N280, N377, N410, and N495 each carry an N-linked (GlcNAc...) asparagine glycan. H538 (proton acceptor) is an active-site residue. O2 contacts are provided by R559 and V560. G571 and M583 together coordinate FAD.

Belongs to the GMC oxidoreductase family. As to quaternary structure, homodimer. Requires FAD as cofactor.

The protein resides in the secreted. It localises to the cell wall. Its subcellular location is the cytoplasm. The protein localises to the extracellular space. It is found in the extracellular matrix. The enzyme catalyses beta-D-glucose + O2 = D-glucono-1,5-lactone + H2O2. Glucose oxidase catalyzes the oxidation of beta-D-glucose to D-glucono-delta-lactone and hydrogen peroxide in the presence of molecular oxygen. Acts as a critical factor modulating pathogenicity by controlling transcription of genes important for fungal secondary metabolism and infection such as those coding for enzymes involved in degradation of the host cell wall. The chain is Glucose oxidase from Aspergillus carbonarius (strain ITEM 5010).